A 427-amino-acid chain; its full sequence is Transcobalamin-2 (427 aa).

Positions Met-1–Ala-18 are cleaved as a signal peptide. Disulfide bonds link Cys-21–Cys-268, Cys-116–Cys-310, and Cys-165–Cys-208. Cob(II)alamin contacts are provided by residues Thr-152–Gln-156, His-193, His-193–Asp-197, Asn-245, Ser-248, Gln-292, and Trp-395–Leu-397.

Belongs to the eukaryotic cobalamin transport proteins family. As to quaternary structure, interacts with CD320 (via LDL-receptor class A domains).

It localises to the secreted. Functionally, primary vitamin B12-binding and transport protein. Delivers cobalamin to cells. This Rattus norvegicus (Rat) protein is Transcobalamin-2 (Tcn2).